A 398-amino-acid polypeptide reads, in one-letter code: MSKLVLVLNCGSSSLKFAIVDAVSGEEHLTGLAECLHLPEARIKWKLDGKHEAQLGDGAAHEEALAFMVESIIASKPEFAANLAAIGHRVVHGGEKFTQSVLIDETVVKGIEDCSALAPLHNPAHIIGIKAAQKAFPALKNVAVFDTAFHQTMPEEAYLYALPYNLYTDHAIRRYGMHGTSHLFITRVTAELLEKPVDELNIINCHLGNGASVCAIKNGKSVDTSMGLTPLEGLVMGTRCGDIDPAIIFHLHDTLGYSVEKINNMLTKESGLQGLTQVTSDCRFVEDNYGKKEEATRAMDVFCHRLAKYVAGYTATLEGRLDAITFTGGIGENSAPIREMVLNRLAILGVEVDVEANLKARFGKEGVITTANSRVPAMVVSTNEELVIAEDTARLAAI.

N9 serves as a coordination point for Mg(2+). K16 contacts ATP. R89 contacts substrate. The active-site Proton donor/acceptor is D146. ATP-binding positions include 206 to 210, 281 to 283, and 329 to 333; these read HLGNG, DCR, and GIGEN. Residue E384 coordinates Mg(2+).

Belongs to the acetokinase family. Homodimer. Mg(2+) serves as cofactor. Mn(2+) is required as a cofactor.

It is found in the cytoplasm. It catalyses the reaction acetate + ATP = acetyl phosphate + ADP. It functions in the pathway metabolic intermediate biosynthesis; acetyl-CoA biosynthesis; acetyl-CoA from acetate: step 1/2. Catalyzes the formation of acetyl phosphate from acetate and ATP. Can also catalyze the reverse reaction. This Photobacterium profundum (strain SS9) protein is Acetate kinase 1.